The chain runs to 565 residues: Adenine deaminase 1 (565 aa).

It belongs to the metallo-dependent hydrolases superfamily. Adenine deaminase family. It depends on Mn(2+) as a cofactor.

It catalyses the reaction adenine + H2O + H(+) = hypoxanthine + NH4(+). This chain is Adenine deaminase 1, found in Rhizobium etli (strain ATCC 51251 / DSM 11541 / JCM 21823 / NBRC 15573 / CFN 42).